The chain runs to 445 residues: FAS-associated factor 2 (445 aa).

The residue at position 2 (alanine 2) is an N-acetylalanine. The UBA domain maps to 12–48 (EQTEKLLQFQDLTGIESMDQCRHTLEQHNWNIEAAVQ). Position 167 is an N6-acetyllysine (lysine 167). Positions 275 to 350 (SERLEREERN…EEKERKLECL (76 aa)) form a coiled coil. The interval 299–361 (ASLRADQEKE…PEPSPDDPES (63 aa)) is disordered. The span at 303-348 (ADQEKERKKREERERKRRKEEEVQQQKLAEERRRRNLQEEKERKLE) shows a compositional bias: basic and acidic residues. Residues 357–439 (DDPESVKIIF…GLSHTEVLFV (83 aa)) form the UBX domain.

In terms of assembly, identified in a complex that contains SEL1L, OS9, FAF2/UBXD8, UBE2J1/UBC6E and AUP1. Interacts with YOD1. Interacts (via N-terminus) with UBQLN2 (via C-terminus). Interacts with PNPLA2 and UBAC2. Interacts with ZFAND2B; probably through VCP. Interacts with LMBR1L.

It localises to the cytoplasm. Its subcellular location is the lipid droplet. It is found in the endoplasmic reticulum. In terms of biological role, plays an important role in endoplasmic reticulum-associated degradation (ERAD) that mediates ubiquitin-dependent degradation of misfolded endoplasmic reticulum proteins. By controlling the steady-state expression of the IGF1R receptor, indirectly regulates the insulin-like growth factor receptor signaling pathway. Involved in inhibition of lipid droplet degradation by binding to phospholipase PNPL2 and inhibiting its activity by promoting dissociation of PNPL2 from its endogenous activator, ABHD5 which inhibits the rate of triacylglycerol hydrolysis. Involved in stress granule disassembly: associates with ubiquitinated G3BP1 in response to heat shock, thereby promoting interaction between ubiquitinated G3BP1 and VCP, followed by G3BP1 extraction from stress granules and stress granule disassembly. The polypeptide is FAS-associated factor 2 (FAF2) (Bos taurus (Bovine)).